A 1565-amino-acid chain; its full sequence is Structure-specific endonuclease subunit SLX4 (1565 aa).

Residues 1 to 87 (MVPESAPNGN…ENEYKLDATD (87 aa)) form a disordered region. Positions 7 to 24 (PNGNSQPLPSCFTTTGVP) are enriched in polar residues. Residues 43 to 58 (KRADPERLRHASEESP) are compositionally biased toward basic and acidic residues. Ser111 bears the Phosphoserine mark. Lys115 is covalently cross-linked (Glycyl lysine isopeptide (Lys-Gly) (interchain with G-Cter in SUMO2)). UBZ4-type zinc fingers lie at residues 117-147 (LFFC…DEAE) and 157-185 (IPDC…VRME). Residues Cys120, Cys123, His138, Cys142, Cys160, and Cys163 each coordinate Zn(2+). A Glycyl lysine isopeptide (Lys-Gly) (interchain with G-Cter in SUMO2) cross-link involves residue Lys171. Residues His176 and Cys180 each contribute to the Zn(2+) site. Disordered stretches follow at residues 203–242 (EVDG…PEAP), 279–305 (GAEK…ETTG), and 387–418 (EPQL…SHSP). Positions 220–236 (LKRKGVTTKREPRRRKV) are enriched in basic residues. Lys283 is covalently cross-linked (Glycyl lysine isopeptide (Lys-Gly) (interchain with G-Cter in SUMO2)). Polar residues predominate over residues 296–305 (LVTQDSETTG). The segment at 499 to 1565 (MVNNPHLSDV…PSGRKKKDQK (1067 aa)) is interaction with PLK1 and TERF2-TERF2IP. In terms of domain architecture, BTB spans 506 to 579 (SDVQFQLDSG…LYMADTDMPP (74 aa)). A Glycyl lysine isopeptide (Lys-Gly) (interchain with G-Cter in SUMO2) cross-link involves residue Lys649. Disordered stretches follow at residues 683–769 (RAAD…DPSF), 789–848 (GCKQ…SPSQ), 861–943 (PSVS…SPRA), 963–989 (DEEL…EFSP), 1063–1099 (PGVS…PNLE), 1128–1212 (GRQA…MGDY), and 1249–1337 (SDDC…ITPM). The segment covering 715 to 730 (ENTEHMESSGLEKEEA) has biased composition (basic and acidic residues). A compositionally biased stretch (polar residues) spans 798 to 808 (PRVSSELSQIT). Over residues 809–822 (VDHEEQSDHVRETQ) the composition is skewed to basic and acidic residues. Composition is skewed to low complexity over residues 833–848 (SCSL…SPSQ) and 861–875 (PSVS…RVAS). Phosphoserine occurs at positions 845 and 875. Residues 877–894 (RSLSPTTPTKQRRGSNIV) show a composition bias toward polar residues. Residues Lys886, Lys898, and Lys925 each participate in a glycyl lysine isopeptide (Lys-Gly) (interchain with G-Cter in SUMO2) cross-link. A phosphoserine mark is found at Ser926 and Ser940. The span at 967–985 (EHTKTESVSKDSPEGRKVP) shows a compositional bias: basic and acidic residues. A Glycyl lysine isopeptide (Lys-Gly) (interchain with G-Cter in SUMO2) cross-link involves residue Lys983. Ser988 carries the post-translational modification Phosphoserine. Residues 1120–1413 (ITLGAFDSGR…TTETCNPSRL (294 aa)) are interaction with MUS81. Acidic residues predominate over residues 1179-1189 (DVVEVGDSDDE). A phosphoserine mark is found at Ser1249 and Ser1254. Acidic residues predominate over residues 1285 to 1295 (LWDDWNEEEGQ). Glycyl lysine isopeptide (Lys-Gly) (interchain with G-Cter in SUMO2) cross-links involve residues Lys1349 and Lys1350. Disordered stretches follow at residues 1381–1449 (ESDS…SSKS) and 1546–1565 (KEKL…KDQK). A Phosphoserine modification is found at Ser1384. Residues 1401–1412 (QASTTETCNPSR) are compositionally biased toward polar residues. An interaction with SLX1 region spans residues 1406–1565 (ETCNPSRLPT…PSGRKKKDQK (160 aa)). Positions 1437–1449 (SVDGSDNSFSSKS) are enriched in low complexity. Positions 1547–1565 (EKLKHKRRQPSGRKKKDQK) are enriched in basic residues.

It belongs to the SLX4 family. Forms a heterodimer with SLX1A/GIYD1. Interacts with ERCC4/XPF; catalytic subunit of the ERCC4-ERCC1 endonuclease. Interacts with MUS81; catalytic subunit of the MUS81-EME1 endonuclease. Interacts with MSH2; component of the MSH2-MSH3 mismatch repair complex. Interacts with TERF2-TERF2IP. Interacts with PLK1 and SLX4IP. Highly expressed in testis. Expressed in bone marrow, brain, thymus and weakly in heart, kidney and spleen.

It is found in the nucleus. Its function is as follows. Regulatory subunit that interacts with and increases the activity of different structure-specific endonucleases. Has several distinct roles in protecting genome stability by resolving diverse forms of deleterious DNA structures originating from replication and recombination intermediates and from DNA damage. Component of the SLX1-SLX4 structure-specific endonuclease that resolves DNA secondary structures generated during DNA repair and recombination. Has endonuclease activity towards branched DNA substrates, introducing single-strand cuts in duplex DNA close to junctions with ss-DNA. Has a preference for 5'-flap structures, and promotes symmetrical cleavage of static and migrating Holliday junctions (HJs). Resolves HJs by generating two pairs of ligatable, nicked duplex products. Interacts with the structure-specific ERCC4-ERCC1 endonuclease and promotes the cleavage of bubble structures. Interacts with the structure-specific MUS81-EME1 endonuclease and promotes the cleavage of 3'-flap and replication fork-like structures. SLX4 is required for recovery from alkylation-induced DNA damage and is involved in the resolution of DNA double-strand breaks. This Mus musculus (Mouse) protein is Structure-specific endonuclease subunit SLX4 (Slx4).